Reading from the N-terminus, the 362-residue chain is Chorismate synthase (362 aa).

The NADP(+) site is built by Arg-48 and Arg-54. FMN contacts are provided by residues 131-133 (RSS), 243-244 (NA), Gly-287, 302-306 (KPTSS), and Arg-328.

This sequence belongs to the chorismate synthase family. Homotetramer. FMNH2 is required as a cofactor.

It carries out the reaction 5-O-(1-carboxyvinyl)-3-phosphoshikimate = chorismate + phosphate. Its pathway is metabolic intermediate biosynthesis; chorismate biosynthesis; chorismate from D-erythrose 4-phosphate and phosphoenolpyruvate: step 7/7. Functionally, catalyzes the anti-1,4-elimination of the C-3 phosphate and the C-6 proR hydrogen from 5-enolpyruvylshikimate-3-phosphate (EPSP) to yield chorismate, which is the branch point compound that serves as the starting substrate for the three terminal pathways of aromatic amino acid biosynthesis. This reaction introduces a second double bond into the aromatic ring system. The protein is Chorismate synthase of Bradyrhizobium diazoefficiens (strain JCM 10833 / BCRC 13528 / IAM 13628 / NBRC 14792 / USDA 110).